A 590-amino-acid chain; its full sequence is TPR repeat-containing protein PA4667 (590 aa).

TPR repeat units follow at residues 235-268 (VAPL…HPDD), 269-302 (KRVR…FPDD), 370-403 (LPAQ…QPDY), 405-438 (IQLY…YPED), and 508-541 (PAIL…YPDH).

In Pseudomonas aeruginosa (strain ATCC 15692 / DSM 22644 / CIP 104116 / JCM 14847 / LMG 12228 / 1C / PRS 101 / PAO1), this protein is TPR repeat-containing protein PA4667.